The following is a 504-amino-acid chain: Prenylcysteine oxidase 1 (504 aa).

Residues 1–28 (MGRFAATLVGSLFGLGLLLCGLGRLASA) form the signal peptide. 3 N-linked (GlcNAc...) asparagine glycosylation sites follow: asparagine 196, asparagine 322, and asparagine 352.

Belongs to the prenylcysteine oxidase family. FAD serves as cofactor. In terms of tissue distribution, expressed mainly in cerebrum.

Its subcellular location is the lysosome. The catalysed reaction is an S-polyprenyl-L-cysteine + O2 + H2O = a polyprenal + L-cysteine + H2O2. It catalyses the reaction S-(2E,6E)-farnesyl-L-cysteine + O2 + H2O = (2E,6E)-farnesal + L-cysteine + H2O2. The enzyme catalyses [(2E,6E,10E)-geranylgeranyl]-L-cysteine + O2 + H2O = (2E,6E,10E)-geranylgeranial + L-cysteine + H2O2. Its function is as follows. Prenylcysteine oxidase that cleaves the thioether bond of prenyl-L-cysteines, such as farnesylcysteine and geranylgeranylcysteine. Only active against free prenylcysteines and not prenylcysteine residues within prenylated proteins or peptides. Involved in the final step in the degradation of prenylated proteins, by degrading prenylcysteines after the protein has been degraded. This Rattus norvegicus (Rat) protein is Prenylcysteine oxidase 1.